The chain runs to 1462 residues: Iron-sulfur cluster assembly protein SufD (1462 aa).

Disordered stretches follow at residues 500-525, 938-970, and 1111-1153; these read IDNN…DNPY, NQNK…GTEQ, and NIPS…EKEE. The span at 510–523 shows a compositional bias: low complexity; sequence NNNNNNNNNNNCDN. A compositionally biased stretch (basic and acidic residues) spans 961–970; it reads HIQDEQGTEQ. Residues 1111–1136 are compositionally biased toward low complexity; it reads NIPSNNKQTNSNNNSEYNNEQNNCSN.

The protein belongs to the iron-sulfur cluster assembly SufBD family. In terms of assembly, component of a complex composed of SufB, SufC and SufD in a stoichiometric ratio of 1:2:1. Interacts with SufB. Interacts with SufC; the interaction enhances the ATPase activity of SufC. Proteolytically cleaved.

The protein localises to the plastid. The protein resides in the apicoplast. The protein operates within cofactor biosynthesis; iron-sulfur cluster biosynthesis. In terms of biological role, participates in the sulfur mobilization (SUF) pathway for iron-sulfur (Fe-S) cluster biogenesis. As part of a complex consisting of SufB-SufC(2)-SufD, involved in assembly of [4Fe-4S] clusters. Enhances the ATPase activity of SufC. The chain is Iron-sulfur cluster assembly protein SufD from Plasmodium falciparum (isolate 3D7).